Reading from the N-terminus, the 144-residue chain is Large ribosomal subunit protein uL15 (144 aa).

The tract at residues 1–59 (MELNNLKPAEGAKHAKRRVGRGIGSGLGKTAGRGHKGQKSRSGGFHKVGFEGGQMPLQR) is disordered. The span at 21–31 (RGIGSGLGKTA) shows a compositional bias: gly residues.

It belongs to the universal ribosomal protein uL15 family. In terms of assembly, part of the 50S ribosomal subunit.

In terms of biological role, binds to the 23S rRNA. This is Large ribosomal subunit protein uL15 from Burkholderia thailandensis (strain ATCC 700388 / DSM 13276 / CCUG 48851 / CIP 106301 / E264).